The following is a 657-amino-acid chain: UvrABC system protein B (657 aa).

A Helicase ATP-binding domain is found at 25–182 (NSIKSNNRAQ…KKLIEIQYER (158 aa)). Residue 38 to 45 (GVTGSGKT) coordinates ATP. Positions 91–114 (YYDYYQPEAYVPQTDTFIEKDASI) match the Beta-hairpin motif. A Helicase C-terminal domain is found at 429-595 (QIDDLYGEIN…TIIKDVRDII (167 aa)). The region spanning 621-656 (DKLIKDLTEEMLLAAKNLQFERAAELRDIINEIKDG) is the UVR domain.

This sequence belongs to the UvrB family. In terms of assembly, forms a heterotetramer with UvrA during the search for lesions. Interacts with UvrC in an incision complex.

Its subcellular location is the cytoplasm. Its function is as follows. The UvrABC repair system catalyzes the recognition and processing of DNA lesions. A damage recognition complex composed of 2 UvrA and 2 UvrB subunits scans DNA for abnormalities. Upon binding of the UvrA(2)B(2) complex to a putative damaged site, the DNA wraps around one UvrB monomer. DNA wrap is dependent on ATP binding by UvrB and probably causes local melting of the DNA helix, facilitating insertion of UvrB beta-hairpin between the DNA strands. Then UvrB probes one DNA strand for the presence of a lesion. If a lesion is found the UvrA subunits dissociate and the UvrB-DNA preincision complex is formed. This complex is subsequently bound by UvrC and the second UvrB is released. If no lesion is found, the DNA wraps around the other UvrB subunit that will check the other stand for damage. In Clostridium beijerinckii (strain ATCC 51743 / NCIMB 8052) (Clostridium acetobutylicum), this protein is UvrABC system protein B.